The following is a 751-amino-acid chain: 1,3-beta-galactosyl-N-acetylhexosamine phosphorylase (751 aa).

Asp-313 functions as the Proton donor in the catalytic mechanism.

It belongs to the glycoside hydrolase 112 family. As to quaternary structure, homodimer.

It catalyses the reaction beta-D-galactosyl-(1-&gt;3)-N-acetyl-D-glucosamine + phosphate = alpha-D-galactose 1-phosphate + N-acetyl-D-glucosamine. Its function is as follows. Reversibly phosphorolyzes lacto-N-biose to Gal1-P and N-acetylglucosamine (GlcNAc) and galacto-N-biose to Gal1-P and N-acetylgalactosamine (GalNAc). Involved in the lacto-N-biose I/galacto-N-biose (LNB/GNB) degradation pathway, which is important for host intestinal colonization by bifidobacteria. The chain is 1,3-beta-galactosyl-N-acetylhexosamine phosphorylase (lnpA) from Bifidobacterium longum subsp. longum (strain ATCC 15707 / DSM 20219 / JCM 1217 / NCTC 11818 / E194b).